A 259-amino-acid chain; its full sequence is Probable dihydroorotate dehydrogenase B (NAD(+)), electron transfer subunit (259 aa).

The region spanning 1-89 is the FAD-binding FR-type domain; that stretch reads MLPLNATIVQ…RGPFGKGFSL (89 aa). The [2Fe-2S] cluster site is built by cysteine 211, cysteine 216, cysteine 219, and cysteine 229.

This sequence belongs to the PyrK family. Heterotetramer of 2 PyrK and 2 PyrD type B subunits. The cofactor is [2Fe-2S] cluster. FAD is required as a cofactor.

Its pathway is pyrimidine metabolism; UMP biosynthesis via de novo pathway; orotate from (S)-dihydroorotate (NAD(+) route): step 1/1. Functionally, responsible for channeling the electrons from the oxidation of dihydroorotate from the FMN redox center in the PyrD type B subunit to the ultimate electron acceptor NAD(+). In Methanosarcina barkeri (strain Fusaro / DSM 804), this protein is Probable dihydroorotate dehydrogenase B (NAD(+)), electron transfer subunit.